A 43-amino-acid chain; its full sequence is Mu-conotoxin-like Cal 12.2c (43 aa).

Residue R1 is a propeptide. 4 disulfide bridges follow: C4–C16, C11–C24, C18–C29, and C23–C35. W31 carries the post-translational modification 6'-bromotryptophan. Residue P36 is modified to 4-hydroxyproline. W40 is modified (6'-bromotryptophan).

In terms of tissue distribution, expressed by the venom duct.

Its subcellular location is the secreted. Its function is as follows. Mu-conotoxins block voltage-gated sodium channels. This toxin reversibly blocks voltage-gated sodium channel in cephalopods, with no alteration in the voltage dependence of sodium conductance or on the kinetics of inactivation. The chain is Mu-conotoxin-like Cal 12.2c from Californiconus californicus (California cone).